Consider the following 623-residue polypeptide: Kelch-like protein diablo (623 aa).

Residues 1 to 54 (MGDLPGSGSTAQPRDAAVTGTGGNSTAGGGSSVGSTAVDRPPSPARLSHTSEKH) form a disordered region. Threonine 19 bears the Phosphothreonine mark. Over residues 20–32 (GTGGNSTAGGGSS) the composition is skewed to gly residues. Positions 72–139 (CDVVLNVGGR…CYTAHIMVEE (68 aa)) constitute a BTB domain. Positions 174–276 (CLGIRAFADT…SPKFLVGTVG (103 aa)) constitute a BACK domain. Kelch repeat units follow at residues 323–369 (VLFA…VLND), 371–417 (LYAV…VLDG), 418–464 (FLYA…VLGG), 466–511 (LYAI…VFNN), 513–558 (IYAV…VVNG), and 559–605 (QLYA…VMRA).

Its pathway is protein modification; protein ubiquitination. Its function is as follows. Probable substrate-specific adapter of an E3 ubiquitin-protein ligase complex which mediates the ubiquitination and subsequent proteasomal degradation of target proteins. May have a role in synapse differentiation and growth. This Drosophila erecta (Fruit fly) protein is Kelch-like protein diablo.